The sequence spans 38 residues: MLRTIVVFAPIIAALAWVVFNIQKPAREQFNRDFLGKD.

Residues 4–22 (TIVVFAPIIAALAWVVFNI) traverse the membrane as a helical segment.

It belongs to the PsbY family. PSII is composed of 1 copy each of membrane proteins PsbA, PsbB, PsbC, PsbD, PsbE, PsbF, PsbH, PsbI, PsbJ, PsbK, PsbL, PsbM, PsbT, PsbX, PsbY, Psb30/Ycf12, peripheral proteins PsbO, CyanoQ (PsbQ), PsbU, PsbV and a large number of cofactors. It forms dimeric complexes.

The protein resides in the cellular thylakoid membrane. Its function is as follows. Loosely associated component of the core of photosystem II (PSII), it is not always seen in crystals. PSII is a light-driven water plastoquinone oxidoreductase, using light energy to abstract electrons from H(2)O, generating a proton gradient subsequently used for ATP formation. In Prochlorococcus marinus (strain MIT 9215), this protein is Photosystem II reaction center protein Y.